Reading from the N-terminus, the 349-residue chain is tRNA pseudouridine synthase D (349 aa).

Phenylalanine 26 contributes to the substrate binding site. The Nucleophile role is filled by aspartate 79. Residue asparagine 128 coordinates substrate. In terms of domain architecture, TRUD spans 154–302; sequence GVPNYFGSQR…VEGSRRAVLL (149 aa). Residue phenylalanine 328 coordinates substrate.

It belongs to the pseudouridine synthase TruD family.

The enzyme catalyses uridine(13) in tRNA = pseudouridine(13) in tRNA. In terms of biological role, responsible for synthesis of pseudouridine from uracil-13 in transfer RNAs. The polypeptide is tRNA pseudouridine synthase D (Yersinia pseudotuberculosis serotype O:1b (strain IP 31758)).